Consider the following 221-residue polypeptide: GTP cyclohydrolase-2 (221 aa).

R63 to E67 is a binding site for GTP. 3 residues coordinate Zn(2+): C68, C79, and C81. Residues Q84, E107 to R109, and T129 each bind GTP. Residue D141 is the Proton acceptor of the active site. R143 serves as the catalytic Nucleophile. GTP is bound by residues S164 and K169.

Belongs to the GTP cyclohydrolase II family. It depends on Zn(2+) as a cofactor.

The enzyme catalyses GTP + 4 H2O = 2,5-diamino-6-hydroxy-4-(5-phosphoribosylamino)-pyrimidine + formate + 2 phosphate + 3 H(+). It participates in cofactor biosynthesis; riboflavin biosynthesis; 5-amino-6-(D-ribitylamino)uracil from GTP: step 1/4. Catalyzes the conversion of GTP to 2,5-diamino-6-ribosylamino-4(3H)-pyrimidinone 5'-phosphate (DARP), formate and pyrophosphate. This is GTP cyclohydrolase-2 from Streptomyces coelicolor (strain ATCC BAA-471 / A3(2) / M145).